Reading from the N-terminus, the 384-residue chain is WD repeat-containing protein 55 (384 aa).

The disordered stretch occupies residues 1 to 33 (MDPTCQESPAEDSNNEEDLDSTKAAPRIRDTPE). Positions 9 to 19 (PAEDSNNEEDL) are enriched in acidic residues. 7 WD repeats span residues 36 to 75 (VLEAPASGLAFHPTRDLLAAGDVDGDVFVFAYSCQEGETK), 82 to 121 (HHLKSCRAVVFSEDGQKLVTVSKDKAIHVLDVEQGQLERR), 125 to 163 (AHSAPINSLLLVDENVLVTGDDTGGIRLWDQRKEGPLMD), 166 to 205 (QHEEYIADMALDPAKKLLLTASGDGCLGVFNIKRRRFELL), 208 to 247 (PQSGDLTSVALMKYGKKVACGSSEGTIYLFNWNGFGATSD), 250 to 289 (ALRAESIDCMVPVTENLLCTGSTDGIIRAVNILPNRVVGT), and 293 to 332 (HAGEPVEELALSHCGHFLASSGHDQRLKFWDMTQLRTVVV). Phosphoserine occurs at positions 354 and 383. The tract at residues 362–384 (LREDEEEAKAPEEVSGESDDDSD) is disordered. Over residues 375-384 (VSGESDDDSD) the composition is skewed to acidic residues.

Belongs to the WD repeat WDR55 family.

It localises to the nucleus. The protein localises to the nucleolus. It is found in the cytoplasm. In terms of biological role, nucleolar protein that acts as a modulator of rRNA synthesis. Plays a central role during organogenesis. The polypeptide is WD repeat-containing protein 55 (Wdr55) (Rattus norvegicus (Rat)).